The following is a 140-amino-acid chain: uncharacterized protein (140 aa).

Basic and acidic residues predominate over residues 1 to 15 (MQRQTGHMEDKKRTG). Residues 1–34 (MQRQTGHMEDKKRTGLESQGTENAFSDGRDGKDG) are disordered.

This is an uncharacterized protein from Gallus gallus (Chicken).